Reading from the N-terminus, the 120-residue chain is Spermidine export protein MdtJ (120 aa).

A run of 4 helical transmembrane segments spans residues 1–21 (MFYW…TLSM), 31–51 (TGFI…AFAV), 54–74 (IALG…ITLF), and 81–101 (ESLS…IVLI).

This sequence belongs to the drug/metabolite transporter (DMT) superfamily. Small multidrug resistance (SMR) (TC 2.A.7.1) family. MdtJ subfamily. In terms of assembly, forms a complex with MdtI.

Its subcellular location is the cell inner membrane. In terms of biological role, catalyzes the excretion of spermidine. In Klebsiella pneumoniae subsp. pneumoniae (strain ATCC 700721 / MGH 78578), this protein is Spermidine export protein MdtJ.